The chain runs to 313 residues: Probable alpha-L-glutamate ligase (313 aa).

The 183-residue stretch at 112–294 folds into the ATP-grasp domain; the sequence is LQMLMAQGIA…IALQMIVHLE (183 aa). Residues K148, 185–186, D194, and 218–220 each bind ATP; these read EF and RAN. Mg(2+)-binding residues include D255, E267, and N269. Residues D255, E267, and N269 each coordinate Mn(2+).

The protein belongs to the RimK family. It depends on Mg(2+) as a cofactor. Mn(2+) is required as a cofactor.

The polypeptide is Probable alpha-L-glutamate ligase (Pasteurella multocida (strain Pm70)).